The primary structure comprises 561 residues: Serine palmitoyltransferase 2 (561 aa).

Residues 57-77 (PYYISLLTYLNYLILIILGHV) traverse the membrane as a helical segment. Lys-366 is modified (N6-(pyridoxal phosphate)lysine). Residues 443–463 (LGFIVYGVADSPVIPLLLYCP) traverse the membrane as a helical segment.

Belongs to the class-II pyridoxal-phosphate-dependent aminotransferase family. LCB1 and LCB2 encode essential subunits of the enzyme and form a heterodimer. Component of the SPOTS complex, at least composed of LCB1/2 (LCB1 and/or LCB2), ORM1/2 (ORM1 and/or ORM2), SAC1 and TSC3. Interacts with LCB1 and TSC3. It depends on pyridoxal 5'-phosphate as a cofactor.

It localises to the cytoplasm. It is found in the endoplasmic reticulum. The protein localises to the membrane. It catalyses the reaction L-serine + hexadecanoyl-CoA + H(+) = 3-oxosphinganine + CO2 + CoA. The protein operates within lipid metabolism; sphingolipid metabolism. Its function is as follows. Catalytic subunit of serine palmitoyltransferase (SPT), which catalyzes the committed step in the synthesis of sphingolipids, the condensation of serine with palmitoyl CoA to form the long chain base 3-ketosphinganine. In Saccharomyces cerevisiae (strain ATCC 204508 / S288c) (Baker's yeast), this protein is Serine palmitoyltransferase 2 (LCB2).